Reading from the N-terminus, the 791-residue chain is FHF complex subunit HOOK-interacting protein 1B (791 aa).

Disordered regions lie at residues Ala-465–Pro-510 and Ser-524–Glu-556. Position 467 is a phosphoserine (Ser-467). Residues Ser-496–Pro-510 are compositionally biased toward low complexity. Residues Ser-524, Ser-537, Ser-543, Ser-547, and Ser-679 each carry the phosphoserine modification. Low complexity predominate over residues Thr-541–Pro-552. Thr-708 carries the phosphothreonine modification. Ser-716 is subject to Phosphoserine.

The protein belongs to the FHIP family. Component of the FTS/Hook/FHIP complex (FHF complex), composed of AKTIP/FTS, FHIP1B, and one or more members of the Hook family of proteins HOOK1, HOOK2, and HOOK3. The FHF complex associates with the homotypic vesicular sorting complex (the HOPS complex).

Its function is as follows. Component of the FTS/Hook/FHIP complex (FHF complex). The FHF complex may function to promote vesicle trafficking and/or fusion via the homotypic vesicular protein sorting complex (the HOPS complex). FHF complex promotes the distribution of AP-4 complex to the perinuclear area of the cell. This Rattus norvegicus (Rat) protein is FHF complex subunit HOOK-interacting protein 1B (Fhip1b).